We begin with the raw amino-acid sequence, 477 residues long: Methylenetetrahydrofolate--tRNA-(uracil-5-)-methyltransferase TrmFO (477 aa).

An FAD-binding site is contributed by 15–20; it reads GAGLAG.

Belongs to the MnmG family. TrmFO subfamily. Requires FAD as cofactor.

Its subcellular location is the cytoplasm. The enzyme catalyses uridine(54) in tRNA + (6R)-5,10-methylene-5,6,7,8-tetrahydrofolate + NADH + H(+) = 5-methyluridine(54) in tRNA + (6S)-5,6,7,8-tetrahydrofolate + NAD(+). The catalysed reaction is uridine(54) in tRNA + (6R)-5,10-methylene-5,6,7,8-tetrahydrofolate + NADPH + H(+) = 5-methyluridine(54) in tRNA + (6S)-5,6,7,8-tetrahydrofolate + NADP(+). Its function is as follows. Catalyzes the folate-dependent formation of 5-methyl-uridine at position 54 (M-5-U54) in all tRNAs. The chain is Methylenetetrahydrofolate--tRNA-(uracil-5-)-methyltransferase TrmFO from Rhodopseudomonas palustris (strain BisB5).